The following is a 260-amino-acid chain: Hydroxyethylthiazole kinase (260 aa).

Met36 serves as a coordination point for substrate. Arg112 and Thr157 together coordinate ATP. Gly184 provides a ligand contact to substrate.

Belongs to the Thz kinase family. Mg(2+) is required as a cofactor.

It catalyses the reaction 5-(2-hydroxyethyl)-4-methylthiazole + ATP = 4-methyl-5-(2-phosphooxyethyl)-thiazole + ADP + H(+). It functions in the pathway cofactor biosynthesis; thiamine diphosphate biosynthesis; 4-methyl-5-(2-phosphoethyl)-thiazole from 5-(2-hydroxyethyl)-4-methylthiazole: step 1/1. Its function is as follows. Catalyzes the phosphorylation of the hydroxyl group of 4-methyl-5-beta-hydroxyethylthiazole (THZ). This Shouchella clausii (strain KSM-K16) (Alkalihalobacillus clausii) protein is Hydroxyethylthiazole kinase.